The following is a 464-amino-acid chain: UPF0210 protein Cgl1545/cg1743 (464 aa).

It belongs to the UPF0210 family. Homodimer.

The chain is UPF0210 protein Cgl1545/cg1743 from Corynebacterium glutamicum (strain ATCC 13032 / DSM 20300 / JCM 1318 / BCRC 11384 / CCUG 27702 / LMG 3730 / NBRC 12168 / NCIMB 10025 / NRRL B-2784 / 534).